The sequence spans 908 residues: AdoMet-dependent rRNA methyltransferase SPB1 (908 aa).

S-adenosyl-L-methionine-binding residues include Gly57, Trp59, Asp77, Asp93, and Asp118. The active-site Proton acceptor is Lys158. A coiled-coil region spans residues Met378 to Thr422. Disordered stretches follow at residues Ile440–Tyr513, Asn535–Lys715, and Ala806–Arg841. A compositionally biased stretch (acidic residues) spans Asp464–Glu493. The span at Asn535–Lys545 shows a compositional bias: basic and acidic residues. Acidic residues-rich tracts occupy residues Ser546 to Gly564 and Asp579 to Thr591. Residues Glu592 to Lys610 show a composition bias toward basic and acidic residues. Composition is skewed to acidic residues over residues Asp650–Ser678 and Glu685–Asp712. Basic and acidic residues predominate over residues Ala816 to Gly827.

Belongs to the class I-like SAM-binding methyltransferase superfamily. RNA methyltransferase RlmE family. SPB1 subfamily. Component of the nucleolar and nucleoplasmic pre-60S ribosomal particle.

It is found in the nucleus. It localises to the nucleolus. It carries out the reaction a ribonucleotide in rRNA + S-adenosyl-L-methionine = a 2'-O-methylribonucleotide in rRNA + S-adenosyl-L-homocysteine + H(+). Its function is as follows. Required for proper assembly of pre-ribosomal particles during the biogenesis of the 60S ribosomal subunit. The polypeptide is AdoMet-dependent rRNA methyltransferase SPB1 (Cryptococcus neoformans var. neoformans serotype D (strain B-3501A) (Filobasidiella neoformans)).